Here is a 260-residue protein sequence, read N- to C-terminus: Type III pantothenate kinase (260 aa).

6–13 (DVGNTNIT) is a binding site for ATP. Position 107–110 (107–110 (GADR)) interacts with substrate. The active-site Proton acceptor is the Asp109. Position 129 (Asp129) interacts with K(+). Thr132 lines the ATP pocket. Residue Thr184 coordinates substrate.

The protein belongs to the type III pantothenate kinase family. Homodimer. NH4(+) serves as cofactor. K(+) is required as a cofactor.

Its subcellular location is the cytoplasm. It catalyses the reaction (R)-pantothenate + ATP = (R)-4'-phosphopantothenate + ADP + H(+). It functions in the pathway cofactor biosynthesis; coenzyme A biosynthesis; CoA from (R)-pantothenate: step 1/5. Catalyzes the phosphorylation of pantothenate (Pan), the first step in CoA biosynthesis. The polypeptide is Type III pantothenate kinase (Agathobacter rectalis (strain ATCC 33656 / DSM 3377 / JCM 17463 / KCTC 5835 / VPI 0990) (Eubacterium rectale)).